Consider the following 525-residue polypeptide: GMP synthase [glutamine-hydrolyzing] (525 aa).

The region spanning 9–207 is the Glutamine amidotransferase type-1 domain; that stretch reads KILILDFGSQ…IVDICGCDTL (199 aa). The active-site Nucleophile is Cys86. Catalysis depends on residues His181 and Glu183. In terms of domain architecture, GMPS ATP-PPase spans 208-400; that stretch reads WTPANIAQDA…LGLPYDMVYR (193 aa). 235 to 241 is an ATP binding site; the sequence is SGGVDSS.

In terms of assembly, homodimer.

It carries out the reaction XMP + L-glutamine + ATP + H2O = GMP + L-glutamate + AMP + diphosphate + 2 H(+). It participates in purine metabolism; GMP biosynthesis; GMP from XMP (L-Gln route): step 1/1. In terms of biological role, catalyzes the synthesis of GMP from XMP. The protein is GMP synthase [glutamine-hydrolyzing] of Marinomonas sp. (strain MWYL1).